A 333-amino-acid chain; its full sequence is Holliday junction branch migration complex subunit RuvB (333 aa).

Residues 1 to 182 (MTNRILDMEQ…FGITGHMEYY (182 aa)) are large ATPase domain (RuvB-L). Residues L21, R22, G63, K66, T67, T68, 129 to 131 (EDF), R172, Y182, and R219 each bind ATP. T67 contributes to the Mg(2+) binding site. The tract at residues 183 to 253 (ELADLTEIVE…ITDKALTMLD (71 aa)) is small ATPAse domain (RuvB-S). The interval 256–333 (REGLDYVDQK…EHLGYPYTEK (78 aa)) is head domain (RuvB-H). Residues R292, R311, R313, and R316 each contribute to the DNA site.

The protein belongs to the RuvB family. As to quaternary structure, homohexamer. Forms an RuvA(8)-RuvB(12)-Holliday junction (HJ) complex. HJ DNA is sandwiched between 2 RuvA tetramers; dsDNA enters through RuvA and exits via RuvB. An RuvB hexamer assembles on each DNA strand where it exits the tetramer. Each RuvB hexamer is contacted by two RuvA subunits (via domain III) on 2 adjacent RuvB subunits; this complex drives branch migration. In the full resolvosome a probable DNA-RuvA(4)-RuvB(12)-RuvC(2) complex forms which resolves the HJ.

Its subcellular location is the cytoplasm. It catalyses the reaction ATP + H2O = ADP + phosphate + H(+). Its function is as follows. The RuvA-RuvB-RuvC complex processes Holliday junction (HJ) DNA during genetic recombination and DNA repair, while the RuvA-RuvB complex plays an important role in the rescue of blocked DNA replication forks via replication fork reversal (RFR). RuvA specifically binds to HJ cruciform DNA, conferring on it an open structure. The RuvB hexamer acts as an ATP-dependent pump, pulling dsDNA into and through the RuvAB complex. RuvB forms 2 homohexamers on either side of HJ DNA bound by 1 or 2 RuvA tetramers; 4 subunits per hexamer contact DNA at a time. Coordinated motions by a converter formed by DNA-disengaged RuvB subunits stimulates ATP hydrolysis and nucleotide exchange. Immobilization of the converter enables RuvB to convert the ATP-contained energy into a lever motion, pulling 2 nucleotides of DNA out of the RuvA tetramer per ATP hydrolyzed, thus driving DNA branch migration. The RuvB motors rotate together with the DNA substrate, which together with the progressing nucleotide cycle form the mechanistic basis for DNA recombination by continuous HJ branch migration. Branch migration allows RuvC to scan DNA until it finds its consensus sequence, where it cleaves and resolves cruciform DNA. The sequence is that of Holliday junction branch migration complex subunit RuvB from Streptococcus suis (strain 98HAH33).